The primary structure comprises 293 residues: UDP-N-acetylglucosamine transferase subunit ALG13 (293 aa).

It belongs to the glycosyltransferase 28 family. Heterodimer with ALG14 to form a functional enzyme.

It is found in the endoplasmic reticulum. The enzyme catalyses an N-acetyl-alpha-D-glucosaminyl-diphospho-di-trans,poly-cis-dolichol + UDP-N-acetyl-alpha-D-glucosamine = an N,N'-diacetylchitobiosyl-diphospho-di-trans,poly-cis-dolichol + UDP + H(+). Functionally, involved in protein N-glycosylation. Essential for the second step of the dolichol-linked oligosaccharide pathway. This is UDP-N-acetylglucosamine transferase subunit ALG13 (ALG13) from Candida albicans (strain SC5314 / ATCC MYA-2876) (Yeast).